Here is a 506-residue protein sequence, read N- to C-terminus: Galactose/methyl galactoside import ATP-binding protein MglA (506 aa).

ABC transporter domains lie at 14 to 249 (LEMS…VGRS) and 264 to 506 (VILE…SLHL). 46 to 53 (GENGAGKS) contacts ATP.

Belongs to the ABC transporter superfamily. Galactose/methyl galactoside importer (TC 3.A.1.2.3) family. As to quaternary structure, the complex is composed of one ATP-binding protein (MglA), two transmembrane proteins (MglC) and a solute-binding protein (MglB).

The protein localises to the cell inner membrane. It carries out the reaction D-galactose(out) + ATP + H2O = D-galactose(in) + ADP + phosphate + H(+). The catalysed reaction is methyl beta-D-galactoside(out) + ATP + H2O = methyl beta-D-galactoside(in) + ADP + phosphate + H(+). Part of the ABC transporter complex MglABC involved in galactose/methyl galactoside import. Responsible for energy coupling to the transport system. The chain is Galactose/methyl galactoside import ATP-binding protein MglA from Yersinia pestis bv. Antiqua (strain Antiqua).